A 285-amino-acid polypeptide reads, in one-letter code: Diphthine methyl ester synthase (285 aa).

Residues leucine 9, aspartate 84, glycine 87, 112–113, and leucine 163 contribute to the S-adenosyl-L-methionine site; that span reads SI. At serine 171 the chain carries Phosphoserine. Valine 225 and histidine 250 together coordinate S-adenosyl-L-methionine.

It belongs to the diphthine synthase family.

It catalyses the reaction 2-[(3S)-amino-3-carboxypropyl]-L-histidyl-[translation elongation factor 2] + 4 S-adenosyl-L-methionine = diphthine methyl ester-[translation elongation factor 2] + 4 S-adenosyl-L-homocysteine + 3 H(+). It functions in the pathway protein modification; peptidyl-diphthamide biosynthesis. Functionally, S-adenosyl-L-methionine-dependent methyltransferase that catalyzes four methylations of the modified target histidine residue in translation elongation factor 2 (EF-2), to form an intermediate called diphthine methyl ester. The four successive methylation reactions represent the second step of diphthamide biosynthesis. The sequence is that of Diphthine methyl ester synthase (DPH5) from Homo sapiens (Human).